A 281-amino-acid polypeptide reads, in one-letter code: Diaminopimelate epimerase (281 aa).

The substrate site is built by N13 and N66. Residue C75 is the Proton donor of the active site. Substrate-binding positions include 76–77, N164, N197, and 215–216; these read GN and ER. Residue C224 is the Proton acceptor of the active site. Substrate is bound at residue 225 to 226; the sequence is GT.

It belongs to the diaminopimelate epimerase family. Homodimer.

It is found in the cytoplasm. The enzyme catalyses (2S,6S)-2,6-diaminopimelate = meso-2,6-diaminopimelate. Its pathway is amino-acid biosynthesis; L-lysine biosynthesis via DAP pathway; DL-2,6-diaminopimelate from LL-2,6-diaminopimelate: step 1/1. In terms of biological role, catalyzes the stereoinversion of LL-2,6-diaminopimelate (L,L-DAP) to meso-diaminopimelate (meso-DAP), a precursor of L-lysine and an essential component of the bacterial peptidoglycan. This Gloeothece citriformis (strain PCC 7424) (Cyanothece sp. (strain PCC 7424)) protein is Diaminopimelate epimerase.